The sequence spans 434 residues: Maintenance of mitochondrial morphology protein 1 (434 aa).

Residues 1-105 (MEMSELLASE…SFSSQSFAEG (105 aa)) lie on the Lumenal side of the membrane. The chain crosses the membrane as a helical span at residues 106-126 (LIVGQLSVIVALIFVIKFFVF). Residues 127–434 (SEGGTKTATA…DDSVSVKSND (308 aa)) lie on the Cytoplasmic side of the membrane. Residues 194 to 408 (SPESLDWFNV…EPRFQFVKLP (215 aa)) enclose the SMP-LTD domain. Residues 415-434 (KNTRKEKTDTDDSVSVKSND) form a disordered region.

This sequence belongs to the MMM1 family. In terms of assembly, homodimer. Component of the ER-mitochondria encounter structure (ERMES) or MDM complex, composed of MMM1, MDM10, MDM12 and MDM34. An MMM1 homodimer associates with one molecule of MDM12 on each side in a pairwise head-to-tail manner, and the SMP-LTD domains of MMM1 and MDM12 generate a continuous hydrophobic tunnel for phospholipid trafficking.

Its subcellular location is the endoplasmic reticulum membrane. In terms of biological role, component of the ERMES/MDM complex, which serves as a molecular tether to connect the endoplasmic reticulum (ER) and mitochondria. Components of this complex are involved in the control of mitochondrial shape and protein biogenesis, and function in nonvesicular lipid trafficking between the ER and mitochondria. The MDM12-MMM1 subcomplex functions in the major beta-barrel assembly pathway that is responsible for biogenesis of all outer membrane beta-barrel proteins, and acts in a late step after the SAM complex. The MDM10-MDM12-MMM1 subcomplex further acts in the TOM40-specific pathway after the action of the MDM12-MMM1 complex. Essential for establishing and maintaining the structure of mitochondria and maintenance of mtDNA nucleoids. This chain is Maintenance of mitochondrial morphology protein 1, found in Kluyveromyces lactis (strain ATCC 8585 / CBS 2359 / DSM 70799 / NBRC 1267 / NRRL Y-1140 / WM37) (Yeast).